Reading from the N-terminus, the 347-residue chain is NADH-ubiquinone oxidoreductase chain 2 (347 aa).

Helical transmembrane passes span 1-21 (MNPM…SIVL), 25-45 (HWFL…PVLM), 68-88 (MILV…TIMI), 96-116 (MLIT…FWVP), 122-142 (VSLS…LSLL), 145-165 (IFPS…IMIG), 178-198 (IMAY…IYNP), 201-221 (SLLN…LLII), 239-259 (IVVS…PLTG), 274-294 (SSVM…FFYM), and 326-346 (MMSL…LITL).

The protein belongs to the complex I subunit 2 family. As to quaternary structure, core subunit of respiratory chain NADH dehydrogenase (Complex I) which is composed of 45 different subunits. Interacts with TMEM242.

It is found in the mitochondrion inner membrane. The catalysed reaction is a ubiquinone + NADH + 5 H(+)(in) = a ubiquinol + NAD(+) + 4 H(+)(out). Its function is as follows. Core subunit of the mitochondrial membrane respiratory chain NADH dehydrogenase (Complex I) which catalyzes electron transfer from NADH through the respiratory chain, using ubiquinone as an electron acceptor. Essential for the catalytic activity and assembly of complex I. The polypeptide is NADH-ubiquinone oxidoreductase chain 2 (Sylvisorex lunaris (Moon forest shrew)).